Reading from the N-terminus, the 655-residue chain is NACHT, LRR and PYD domains-containing protein 10 (655 aa).

The Pyrin domain maps to 1 to 96 (MAMAKARKPR…VDQLSHICLH (96 aa)). The NACHT domain maps to 167-484 (SLVVLQGSAG…AMSYLVKEDQ (318 aa)). Position 173–180 (173–180 (GSAGTGKT)) interacts with ATP. A compositionally biased stretch (polar residues) spans 597-609 (QSQNLFSVKSSLS). The tract at residues 597–655 (QSQNLFSVKSSLSHGPKEEQKCPSVHGQKEGKDNIAGTQKEASTGKGRGTEETPKNTYI) is disordered. Basic and acidic residues-rich tracts occupy residues 611–629 (GPKEEQKCPSVHGQKEGKD) and 644–655 (RGTEETPKNTYI).

It belongs to the NLRP family. Oligomerizes. Interacts with PYCARD. Also interacts with CASP1 and IL1B. Interacts with NOD1 and components of the NOD1 signaling pathway including RIPK2, NR2C2/TAK1 and IKBKG/NEMO. In terms of tissue distribution, highly expressed in basal and suprabasal epidermal cell layers with lower levels in dermal fibroblast cells (at protein level). Widely expressed with highest levels in heart, brain and skeletal muscle. Also expressed in liver, colon, dermis and epidermis. Little expression detected in myeloid cells or peripheral blood mononuclear cells.

The protein localises to the cytoplasm. It localises to the cell membrane. Inhibits autoprocessing of CASP1, CASP1-dependent IL1B secretion, PYCARD aggregation and PYCARD-mediated apoptosis but not apoptosis induced by FAS or BID. Displays anti-inflammatory activity. Required for immunity against C.albicans infection. Involved in the innate immune response by contributing to pro-inflammatory cytokine release in response to invasive bacterial infection. Contributes to T-cell-mediated inflammatory responses in the skin. Plays a role in protection against periodontitis through its involvement in induction of IL1A via ERK activation in oral epithelial cells infected with periodontal pathogens. Exhibits both ATPase and GTPase activities. This is NACHT, LRR and PYD domains-containing protein 10 (NLRP10) from Homo sapiens (Human).